The primary structure comprises 654 residues: Probable Xaa-Pro aminopeptidase P (654 aa).

4 residues coordinate Mn(2+): Asp-449, Asp-460, Glu-558, and Glu-572.

Belongs to the peptidase M24B family. Mn(2+) is required as a cofactor.

It catalyses the reaction Release of any N-terminal amino acid, including proline, that is linked to proline, even from a dipeptide or tripeptide.. Functionally, catalyzes the removal of a penultimate prolyl residue from the N-termini of peptides. This chain is Probable Xaa-Pro aminopeptidase P (ampp), found in Aspergillus flavus (strain ATCC 200026 / FGSC A1120 / IAM 13836 / NRRL 3357 / JCM 12722 / SRRC 167).